The following is a 256-amino-acid chain: Imidazole glycerol phosphate synthase subunit HisF (256 aa).

Catalysis depends on residues D12 and D131.

Belongs to the HisA/HisF family. In terms of assembly, heterodimer of HisH and HisF.

It is found in the cytoplasm. The enzyme catalyses 5-[(5-phospho-1-deoxy-D-ribulos-1-ylimino)methylamino]-1-(5-phospho-beta-D-ribosyl)imidazole-4-carboxamide + L-glutamine = D-erythro-1-(imidazol-4-yl)glycerol 3-phosphate + 5-amino-1-(5-phospho-beta-D-ribosyl)imidazole-4-carboxamide + L-glutamate + H(+). It functions in the pathway amino-acid biosynthesis; L-histidine biosynthesis; L-histidine from 5-phospho-alpha-D-ribose 1-diphosphate: step 5/9. IGPS catalyzes the conversion of PRFAR and glutamine to IGP, AICAR and glutamate. The HisF subunit catalyzes the cyclization activity that produces IGP and AICAR from PRFAR using the ammonia provided by the HisH subunit. The sequence is that of Imidazole glycerol phosphate synthase subunit HisF from Pseudomonas fluorescens (strain ATCC BAA-477 / NRRL B-23932 / Pf-5).